Reading from the N-terminus, the 1363-residue chain is Spike glycoprotein (1363 aa).

Positions Met-1–Phe-13 are cleaved as a signal peptide. Residues Ala-14 to Pro-1307 are Extracellular-facing. Residues Val-15–Thr-298 enclose the BetaCoV S1-NTD domain. 5 disulfide bridges follow: Cys-21/Cys-165, Cys-160/Cys-193, Cys-172/Cys-252, Cys-286/Cys-296, and Cys-331/Cys-356. N-linked (GlcNAc...) asparagine; by host glycosylation is found at Asn-59 and Asn-133. N-linked (GlcNAc...) asparagine; by host glycosylation is present at Asn-198. Residues Pro-329–Thr-617 form the BetaCoV S1-CTD domain. Asn-359 carries N-linked (GlcNAc...) asparagine; by host glycosylation. 2 disulfides stabilise this stretch: Cys-374/Cys-427 and Cys-386/Cys-615. Residues Asn-437, Asn-649, Asn-676, Asn-696, Asn-714, Asn-739, and Asn-788 are each glycosylated (N-linked (GlcNAc...) asparagine; by host). 2 fusion peptide regions span residues Ser-914–Tyr-935 and Glu-933–Tyr-953. Residue Asn-937 is glycosylated (N-linked (GlcNAc...) asparagine; by host). Cys-938 and Cys-949 are oxidised to a cystine. The tract at residues Gln-1014–Phe-1064 is heptad repeat 1. Positions Gln-1043–Ile-1087 form a coiled coil. 6 N-linked (GlcNAc...) asparagine; by host glycosylation sites follow: Asn-1194, Asn-1224, Asn-1234, Asn-1253, Asn-1267, and Asn-1288. The heptad repeat 2 stretch occupies residues Ala-1258–Asp-1296. A coiled-coil region spans residues Thr-1269–Ile-1297. A helical transmembrane segment spans residues Trp-1308–Ile-1328. The Cytoplasmic segment spans residues Cys-1329–Asp-1363. The short motif at Thr-1359–Asp-1363 is the KxHxx element.

Belongs to the betacoronaviruses spike protein family. As to quaternary structure, homotrimer; each monomer consists of a S1 and a S2 subunit. The resulting peplomers protrude from the virus surface as spikes. Specific enzymatic cleavages in vivo yield mature proteins. The precursor is processed into S1 and S2 by host cell furin or another cellular protease to yield the mature S1 and S2 proteins. Additionally, a second cleavage leads to the release of a fusion peptide after viral attachment to host cell receptor. In terms of processing, the cytoplasmic Cys-rich domain is palmitoylated. Spike glycoprotein is digested within host endosomes.

The protein localises to the virion membrane. It localises to the host endoplasmic reticulum-Golgi intermediate compartment membrane. Its subcellular location is the host cell membrane. Functionally, attaches the virion to the cell membrane by interacting with host receptor, initiating the infection. Its function is as follows. Mediates fusion of the virion and cellular membranes by acting as a class I viral fusion protein. Under the current model, the protein has at least three conformational states: pre-fusion native state, pre-hairpin intermediate state, and post-fusion hairpin state. During viral and target cell membrane fusion, the coiled coil regions (heptad repeats) assume a trimer-of-hairpins structure, positioning the fusion peptide in close proximity to the C-terminal region of the ectodomain. The formation of this structure appears to drive apposition and subsequent fusion of viral and target cell membranes. In terms of biological role, acts as a viral fusion peptide which is unmasked following S2 cleavage occurring upon virus endocytosis. This Bos taurus (Bovine) protein is Spike glycoprotein.